The chain runs to 148 residues: 1,4-dihydroxy-2-naphthoyl-CoA hydrolase (148 aa).

Asp-15 is an active-site residue.

This sequence belongs to the 4-hydroxybenzoyl-CoA thioesterase family. DHNA-CoA hydrolase subfamily.

It carries out the reaction 1,4-dihydroxy-2-naphthoyl-CoA + H2O = 1,4-dihydroxy-2-naphthoate + CoA + H(+). Its pathway is cofactor biosynthesis; phylloquinone biosynthesis. It functions in the pathway quinol/quinone metabolism; 1,4-dihydroxy-2-naphthoate biosynthesis; 1,4-dihydroxy-2-naphthoate from chorismate: step 7/7. Functionally, catalyzes the hydrolysis of 1,4-dihydroxy-2-naphthoyl-CoA (DHNA-CoA) to 1,4-dihydroxy-2-naphthoate (DHNA), a reaction involved in phylloquinone (vitamin K1) biosynthesis. In Nostoc punctiforme (strain ATCC 29133 / PCC 73102), this protein is 1,4-dihydroxy-2-naphthoyl-CoA hydrolase.